Consider the following 860-residue polypeptide: Leucine--tRNA ligase (860 aa).

The 'HIGH' region motif lies at 42–52 (PYPSGRLHMGH). The 'KMSKS' region signature appears at 619 to 623 (KMSKS). Position 622 (Lys-622) interacts with ATP.

It belongs to the class-I aminoacyl-tRNA synthetase family.

The protein localises to the cytoplasm. It carries out the reaction tRNA(Leu) + L-leucine + ATP = L-leucyl-tRNA(Leu) + AMP + diphosphate. This Salmonella typhimurium (strain LT2 / SGSC1412 / ATCC 700720) protein is Leucine--tRNA ligase.